The sequence spans 279 residues: Phosphatidylglycerol--prolipoprotein diacylglyceryl transferase (279 aa).

7 consecutive transmembrane segments (helical) span residues 14–34, 62–82, 106–126, 136–156, 190–210, 218–238, and 252–272; these read IAFS…ACAI, YFLW…ILIY, FVGI…IASY, LLIY…FGRI, PSQL…VMWA, GLLI…AEFY, and LSMG…ILLY. Arginine 155 contacts a 1,2-diacyl-sn-glycero-3-phospho-(1'-sn-glycerol).

Belongs to the Lgt family.

It is found in the cell inner membrane. It carries out the reaction L-cysteinyl-[prolipoprotein] + a 1,2-diacyl-sn-glycero-3-phospho-(1'-sn-glycerol) = an S-1,2-diacyl-sn-glyceryl-L-cysteinyl-[prolipoprotein] + sn-glycerol 1-phosphate + H(+). Its pathway is protein modification; lipoprotein biosynthesis (diacylglyceryl transfer). In terms of biological role, catalyzes the transfer of the diacylglyceryl group from phosphatidylglycerol to the sulfhydryl group of the N-terminal cysteine of a prolipoprotein, the first step in the formation of mature lipoproteins. This chain is Phosphatidylglycerol--prolipoprotein diacylglyceryl transferase, found in Helicobacter pylori (strain HPAG1).